A 249-amino-acid polypeptide reads, in one-letter code: ATP synthase subunit a (249 aa).

A run of 6 helical transmembrane segments spans residues 26-46 (FTNV…FLYL), 84-104 (FFPF…IGLF), 114-134 (IIVT…YGFF), 143-163 (LFVP…IEII), 185-205 (ITLK…ALGI), and 208-228 (AVLP…VAFL).

It belongs to the ATPase A chain family. F-type ATPases have 2 components, CF(1) - the catalytic core - and CF(0) - the membrane proton channel. CF(1) has five subunits: alpha(3), beta(3), gamma(1), delta(1), epsilon(1). CF(0) has three main subunits: a(1), b(2) and c(9-12). The alpha and beta chains form an alternating ring which encloses part of the gamma chain. CF(1) is attached to CF(0) by a central stalk formed by the gamma and epsilon chains, while a peripheral stalk is formed by the delta and b chains.

The protein resides in the cell inner membrane. Functionally, key component of the proton channel; it plays a direct role in the translocation of protons across the membrane. The sequence is that of ATP synthase subunit a from Brucella canis (strain ATCC 23365 / NCTC 10854 / RM-666).